Here is a 429-residue protein sequence, read N- to C-terminus: Phosphomethylpyrimidine synthase 1 (429 aa).

Residues Asn-65, Met-94, Tyr-123, His-162, Ser-184–Gly-186, Asp-225–Arg-228, and Glu-264 each bind substrate. Residue His-268 coordinates Zn(2+). Tyr-291 serves as a coordination point for substrate. His-332 contributes to the Zn(2+) binding site. Cys-408, Cys-411, and Cys-415 together coordinate [4Fe-4S] cluster.

Belongs to the ThiC family. [4Fe-4S] cluster serves as cofactor.

The catalysed reaction is 5-amino-1-(5-phospho-beta-D-ribosyl)imidazole + S-adenosyl-L-methionine = 4-amino-2-methyl-5-(phosphooxymethyl)pyrimidine + CO + 5'-deoxyadenosine + formate + L-methionine + 3 H(+). Its pathway is cofactor biosynthesis; thiamine diphosphate biosynthesis. Catalyzes the synthesis of the hydroxymethylpyrimidine phosphate (HMP-P) moiety of thiamine from aminoimidazole ribotide (AIR) in a radical S-adenosyl-L-methionine (SAM)-dependent reaction. In Methanosphaera stadtmanae (strain ATCC 43021 / DSM 3091 / JCM 11832 / MCB-3), this protein is Phosphomethylpyrimidine synthase 1.